The chain runs to 944 residues: Protein translocase subunit SecA (944 aa).

ATP-binding positions include Gln87, 105–109, and Asp494; that span reads GEGKT. Positions 894 to 944 are disordered; the sequence is HAAAAGDGEEKPRPKQETVVRTQPKVGRNDPCPCGSGKKYKKCHGATEAAV. Residues 901 to 911 are compositionally biased toward basic and acidic residues; it reads GEEKPRPKQET. Zn(2+)-binding residues include Cys925, Cys927, Cys936, and His937.

This sequence belongs to the SecA family. In terms of assembly, monomer and homodimer. Part of the essential Sec protein translocation apparatus which comprises SecA, SecYEG and auxiliary proteins SecDF-YajC and YidC. Zn(2+) is required as a cofactor.

It is found in the cell inner membrane. It localises to the cytoplasm. The catalysed reaction is ATP + H2O + cellular proteinSide 1 = ADP + phosphate + cellular proteinSide 2.. Part of the Sec protein translocase complex. Interacts with the SecYEG preprotein conducting channel. Has a central role in coupling the hydrolysis of ATP to the transfer of proteins into and across the cell membrane, serving as an ATP-driven molecular motor driving the stepwise translocation of polypeptide chains across the membrane. This chain is Protein translocase subunit SecA, found in Anaeromyxobacter sp. (strain Fw109-5).